A 99-amino-acid polypeptide reads, in one-letter code: DNA-binding protein Fis (99 aa).

Positions 75 to 94 form a DNA-binding region, H-T-H motif; sequence QTRAANMLGINRGTLRKKLK.

It belongs to the transcriptional regulatory Fis family. Homodimer.

In terms of biological role, activates ribosomal RNA transcription. Plays a direct role in upstream activation of rRNA promoters. In Haemophilus influenzae (strain PittEE), this protein is DNA-binding protein Fis.